A 282-amino-acid polypeptide reads, in one-letter code: Bis(5'-nucleosyl)-tetraphosphatase, symmetrical (282 aa).

It belongs to the Ap4A hydrolase family.

The catalysed reaction is P(1),P(4)-bis(5'-adenosyl) tetraphosphate + H2O = 2 ADP + 2 H(+). Functionally, hydrolyzes diadenosine 5',5'''-P1,P4-tetraphosphate to yield ADP. The chain is Bis(5'-nucleosyl)-tetraphosphatase, symmetrical from Escherichia fergusonii (strain ATCC 35469 / DSM 13698 / CCUG 18766 / IAM 14443 / JCM 21226 / LMG 7866 / NBRC 102419 / NCTC 12128 / CDC 0568-73).